The primary structure comprises 116 residues: Putative pterin-4-alpha-carbinolamine dehydratase (116 aa).

It belongs to the pterin-4-alpha-carbinolamine dehydratase family.

The catalysed reaction is (4aS,6R)-4a-hydroxy-L-erythro-5,6,7,8-tetrahydrobiopterin = (6R)-L-erythro-6,7-dihydrobiopterin + H2O. This Stenotrophomonas maltophilia (strain R551-3) protein is Putative pterin-4-alpha-carbinolamine dehydratase.